A 354-amino-acid polypeptide reads, in one-letter code: Fructose-bisphosphate aldolase (354 aa).

A D-glyceraldehyde 3-phosphate-binding site is contributed by serine 50. Catalysis depends on aspartate 83, which acts as the Proton donor. Zn(2+)-binding residues include histidine 84, aspartate 105, glutamate 142, and histidine 198. Glycine 199 serves as a coordination point for dihydroxyacetone phosphate. Histidine 232 serves as a coordination point for Zn(2+). Dihydroxyacetone phosphate is bound by residues 233-235 (GSS) and 275-278 (NIDT).

Belongs to the class II fructose-bisphosphate aldolase family. As to quaternary structure, homodimer. The cofactor is Zn(2+).

It catalyses the reaction beta-D-fructose 1,6-bisphosphate = D-glyceraldehyde 3-phosphate + dihydroxyacetone phosphate. The protein operates within carbohydrate biosynthesis; Calvin cycle. Its pathway is carbohydrate degradation; glycolysis; D-glyceraldehyde 3-phosphate and glycerone phosphate from D-glucose: step 4/4. With respect to regulation, activity is stimulated by Fe(2+) in autotrophically grown cells. Catalyzes the aldol condensation of dihydroxyacetone phosphate (DHAP or glycerone-phosphate) with glyceraldehyde 3-phosphate (G3P) to form fructose 1,6-bisphosphate (FBP) in gluconeogenesis and the reverse reaction in glycolysis. The sequence is that of Fructose-bisphosphate aldolase from Xanthobacter flavus.